Here is a 700-residue protein sequence, read N- to C-terminus: Dymeclin (700 aa).

G2 carries N-myristoyl glycine lipidation. A Phosphoserine modification is found at S347.

Belongs to the dymeclin family.

The sequence is that of Dymeclin from Drosophila pseudoobscura pseudoobscura (Fruit fly).